Here is a 343-residue protein sequence, read N- to C-terminus: Methionine import ATP-binding protein MetN 1 (343 aa).

The ABC transporter domain maps to 2–241 (IKLSNITKVF…PKTPLAQKFI (240 aa)). 38-45 (GASGAGKS) is a binding site for ATP.

This sequence belongs to the ABC transporter superfamily. Methionine importer (TC 3.A.1.24) family. As to quaternary structure, the complex is composed of two ATP-binding proteins (MetN), two transmembrane proteins (MetI) and a solute-binding protein (MetQ).

The protein localises to the cell inner membrane. It catalyses the reaction L-methionine(out) + ATP + H2O = L-methionine(in) + ADP + phosphate + H(+). It carries out the reaction D-methionine(out) + ATP + H2O = D-methionine(in) + ADP + phosphate + H(+). In terms of biological role, part of the ABC transporter complex MetNIQ involved in methionine import. Responsible for energy coupling to the transport system. The chain is Methionine import ATP-binding protein MetN 1 from Salmonella choleraesuis (strain SC-B67).